We begin with the raw amino-acid sequence, 256 residues long: Imidazole glycerol phosphate synthase subunit HisF (256 aa).

Active-site residues include aspartate 12 and aspartate 131.

This sequence belongs to the HisA/HisF family. In terms of assembly, heterodimer of HisH and HisF.

The protein localises to the cytoplasm. It carries out the reaction 5-[(5-phospho-1-deoxy-D-ribulos-1-ylimino)methylamino]-1-(5-phospho-beta-D-ribosyl)imidazole-4-carboxamide + L-glutamine = D-erythro-1-(imidazol-4-yl)glycerol 3-phosphate + 5-amino-1-(5-phospho-beta-D-ribosyl)imidazole-4-carboxamide + L-glutamate + H(+). It functions in the pathway amino-acid biosynthesis; L-histidine biosynthesis; L-histidine from 5-phospho-alpha-D-ribose 1-diphosphate: step 5/9. IGPS catalyzes the conversion of PRFAR and glutamine to IGP, AICAR and glutamate. The HisF subunit catalyzes the cyclization activity that produces IGP and AICAR from PRFAR using the ammonia provided by the HisH subunit. This Pseudomonas putida (strain ATCC 700007 / DSM 6899 / JCM 31910 / BCRC 17059 / LMG 24140 / F1) protein is Imidazole glycerol phosphate synthase subunit HisF.